Reading from the N-terminus, the 426-residue chain is Dihydroorotase (426 aa).

2 residues coordinate Zn(2+): histidine 61 and histidine 63. Substrate-binding positions include 63–65 (HCR) and asparagine 95. 4 residues coordinate Zn(2+): glutamate 146, histidine 180, histidine 229, and aspartate 297. The active site involves aspartate 297. A substrate-binding site is contributed by histidine 301.

The protein belongs to the metallo-dependent hydrolases superfamily. DHOase family. Class I DHOase subfamily. The cofactor is Zn(2+).

The catalysed reaction is (S)-dihydroorotate + H2O = N-carbamoyl-L-aspartate + H(+). It functions in the pathway pyrimidine metabolism; UMP biosynthesis via de novo pathway; (S)-dihydroorotate from bicarbonate: step 3/3. Its function is as follows. Catalyzes the reversible cyclization of carbamoyl aspartate to dihydroorotate. The polypeptide is Dihydroorotase (Methanopyrus kandleri (strain AV19 / DSM 6324 / JCM 9639 / NBRC 100938)).